The following is a 154-amino-acid chain: Protein X (154 aa).

The mitochondrial targeting sequence stretch occupies residues 68-117; sequence PCALRFTSARRMETTVNAHQILPKVLHKRTLGLSAMSTTDLEAYFKDCLF.

The protein belongs to the orthohepadnavirus protein X family. In terms of assembly, may form homodimer. May interact with host CEBPA, CFLAR, CREB1, DDB1, E4F1, HBXIP, HSPD1/HSP60, NFKBIA, POLR2E and SMAD4. Interacts with host SMC5-SMC6 complex and induces its degradation. Interacts with host TRPC4AP; leading to prevent ubiquitination of TRPC4AP. Interacts with host PLSCR1; this interaction promotes ubiquitination and degradation of HBx and impairs HBx-mediated cell proliferation. In terms of processing, a fraction may be phosphorylated in insect cells and HepG2 cells, a human hepatoblastoma cell line. Phosphorylated in vitro by host protein kinase C or mitogen-activated protein kinase. N-acetylated in insect cells.

The protein localises to the host cytoplasm. It is found in the host nucleus. Its subcellular location is the host mitochondrion. Functionally, multifunctional protein that plays a role in silencing host antiviral defenses and promoting viral transcription. Does not seem to be essential for HBV infection. May be directly involved in development of cirrhosis and liver cancer (hepatocellular carcinoma). Most of cytosolic activities involve modulation of cytosolic calcium. The effect on apoptosis is controversial depending on the cell types in which the studies have been conducted. May induce apoptosis by localizing in mitochondria and causing loss of mitochondrial membrane potential. May also modulate apoptosis by binding host CFLAR, a key regulator of the death-inducing signaling complex (DISC). Promotes viral transcription by using the host E3 ubiquitin ligase DDB1 to target the SMC5-SMC6 complex to proteasomal degradation. This host complex would otherwise bind to viral episomal DNA, and prevents its transcription. Moderately stimulates transcription of many different viral and cellular transcription elements. Promoters and enhancers stimulated by HBx contain DNA binding sites for NF-kappa-B, AP-1, AP-2, c-EBP, ATF/CREB, or the calcium-activated factor NF-AT. The chain is Protein X from Hepatitis B virus genotype D subtype ayw (isolate France/Tiollais/1979) (HBV-D).